Consider the following 445-residue polypeptide: Histone acetyltransferase of the MYST family 2 (445 aa).

A compositionally biased stretch (polar residues) spans 1–23; that stretch reads MGSSANTETNGNAPPPSSNQKPP. The segment at 1–58 is disordered; sequence MGSSANTETNGNAPPPSSNQKPPATNGVDGSHPPPPPLTPDQAIIESDPSKKRKMGML. The Tudor-knot domain occupies 60–118; it reads LEVGTRVMCRWRDGKHHPVKVIERRRIHNGGQNDYEYYVHYTEFNRRLDEWTQLDQLDL. The region spanning 169 to 440 is the MYST-type HAT domain; the sequence is TKVKNISTIE…VDASKLIWTP (272 aa). The C2HC MYST-type zinc-finger motif lies at 202 to 227; the sequence is LFFCEFCLNFMKRKEQLQRHMRKCDL. Lys-269 carries the post-translational modification N6-acetyllysine; by autocatalysis. Acetyl-CoA-binding positions include 312–314 and 319–325; these read ILT and QRKGYGK. The Proton donor/acceptor role is filled by Glu-345. Ser-349 serves as a coordination point for acetyl-CoA.

The protein belongs to the MYST (SAS/MOZ) family. Interacts with MRG1 and MRG2. In terms of processing, autoacetylation at Lys-269 is required for proper function. Expressed in cotyledons, leaves, stems, roots and, at higher levels in developing flowers, particularly in the anthers and gynoecia. Constitutively expressed in all tissues, predominantly in shoot apical meristem.

It localises to the nucleus. The enzyme catalyses L-lysyl-[protein] + acetyl-CoA = N(6)-acetyl-L-lysyl-[protein] + CoA + H(+). Histone acetyltransferase which may be involved in transcriptional activation. Acetylates 'Lys-5' of histone H4 (H4K5ac). Essential for gametophyte development. Negative regulator of flowering controlling the H4K5ac levels in the FLC chromatin. This Arabidopsis thaliana (Mouse-ear cress) protein is Histone acetyltransferase of the MYST family 2.